Here is a 193-residue protein sequence, read N- to C-terminus: Thioredoxin reductase-like selenoprotein T1b (193 aa).

A signal peptide spans 1–21; sequence METRCLYLLLVCVLSVNHATA. Positions 44–47 form a cross-link, cysteinyl-selenocysteine (Cys-Sec); sequence CVSU. A non-standard amino acid (selenocysteine) is located at residue Sec-47.

This sequence belongs to the SelWTH family. Selenoprotein T subfamily. In terms of processing, may contain a selenide-sulfide bond between Cys-44 and Sec-47. This bond is speculated to serve as redox-active pair. Widely expressed in the embryo. High level in embryonic blood at 24 hours post-fertilization (hpf).

It is found in the endoplasmic reticulum membrane. It catalyses the reaction [thioredoxin]-dithiol + NADP(+) = [thioredoxin]-disulfide + NADPH + H(+). Its function is as follows. Selenoprotein with thioredoxin reductase-like oxidoreductase activity. This is Thioredoxin reductase-like selenoprotein T1b from Danio rerio (Zebrafish).